The chain runs to 177 residues: Probable DNA-directed RNA polymerase subunit delta (177 aa).

One can recognise an HTH HARE-type domain in the interval 14 to 81 (CSMIEVVHSV…GENRWGLRSW (68 aa)). The segment at 91–177 (ILPQPKPKKK…DETEEEEEEL (87 aa)) is disordered. Residues 106–177 (DGFDDYIEED…DETEEEEEEL (72 aa)) are compositionally biased toward acidic residues.

It belongs to the RpoE family. As to quaternary structure, RNAP is composed of a core of 2 alpha, a beta and a beta' subunits. The core is associated with a delta subunit and one of several sigma factors.

Participates in both the initiation and recycling phases of transcription. In the presence of the delta subunit, RNAP displays an increased specificity of transcription, a decreased affinity for nucleic acids, and an increased efficiency of RNA synthesis because of enhanced recycling. The chain is Probable DNA-directed RNA polymerase subunit delta from Bacillus cereus (strain G9842).